Here is a 692-residue protein sequence, read N- to C-terminus: Epithelial sodium channel subunit alpha (692 aa).

The tract at residues 1–67 is disordered; that stretch reads MSSIKGNKLE…PAAPQQPTAE (67 aa). At 1-108 the chain is on the cytoplasmic side; sequence MSSIKGNKLE…CSQHNRMKTA (108 aa). Residues 56–65 show a composition bias toward low complexity; sequence PEPAAPQQPT. Residues 109–129 form a helical membrane-spanning segment; sequence FWAVLWLCTFGMMYWQFGLLF. Over 130–585 the chain is Extracellular; that stretch reads GEYFSYPVSL…SQWSLWFGSS (456 aa). Cystine bridges form between cysteine 156–cysteine 328, cysteine 252–cysteine 259, cysteine 305–cysteine 312, cysteine 417–cysteine 502, cysteine 439–cysteine 479, cysteine 439–cysteine 498, cysteine 443–cysteine 494, cysteine 452–cysteine 479, cysteine 452–cysteine 502, and cysteine 454–cysteine 468. The tract at residues 198–266 is gating release of inhibition by proteolysis (GRIP); protease-sensitive region that is responsible for the proteolytic activation of the channel; it reads RSRRDLRGTL…SDCFYQTYSS (69 aa). A helical transmembrane segment spans residues 586–606; the sequence is VLSVVEMAELIFDLLVITFLM. At 607-692 the chain is on the cytoplasmic side; that stretch reads LLRRFRSRYW…GSSACPLGGP (86 aa). A disordered region spans residues 627–692; that stretch reads EVASTLASSP…GSSACPLGGP (66 aa). Over residues 628–637 the composition is skewed to polar residues; the sequence is VASTLASSPP. The segment covering 653-666 has biased composition (pro residues); sequence GPAPSPALTAPPPA. The PY motif; recruits WW domain-containing proteins and is thereby required for ubiquitination and inhibition of the channel by NEDD4 and NEDD4L motif lies at 663 to 667; the sequence is PPPAY. Positions 682–692 are enriched in low complexity; sequence AGSSACPLGGP.

This sequence belongs to the amiloride-sensitive sodium channel (TC 1.A.6) family. SCNN1A subfamily. Heterotrimer; containing an alpha/SCNN1A, a beta/SCNN1B and a gamma/SCNN1G subunit. Interacts with WWP1 (via WW domains). Interacts with WWP2 (via WW domains); inhibits the channel. Interacts with BPIFA1; the interaction is indirect via SCNN1B and inhibits the proteolytic processing of SCNN1A and SCNN1G and the activation of ENaC. Interacts with the full-length immature form of PCSK9 (pro-PCSK9). Post-translationally, ubiquitinated. Can be ubiquitinated at multiple sites and undergo monoubiquitination and polyubiquitination. Ubiquitination by NEDD4 or NEDD4L inhibits the ENaC channel through endocytosis, intracellular retention and degradation of its individual subunits. N-glycosylated. In terms of processing, ENaC is activated through the proteolytic maturation of its subunits. Furin cleaves the SCNN1A subunit, which results in a stepwise increase in the open probability of the channel due to the release of an inhibitory tract. BPIFA1, which is recruited by the SCNN1B subunit, prevents the proteolytic activation of ENaC.

It localises to the apical cell membrane. Its subcellular location is the cell projection. The protein localises to the cilium. It is found in the cytoplasmic granule. The protein resides in the cytoplasm. It localises to the cytoplasmic vesicle. Its subcellular location is the secretory vesicle. The protein localises to the acrosome. It is found in the flagellum. The enzyme catalyses Na(+)(in) = Na(+)(out). Originally identified and characterized by its inhibition by the diuretic drug amiloride. In terms of biological role, this is one of the three pore-forming subunits of the heterotrimeric epithelial sodium channel (ENaC), a critical regulator of sodium balance and fluid homeostasis. ENaC operates in epithelial tissues, where it mediates the electrodiffusion of sodium ions from extracellular fluid through the apical membrane of cells, with water following osmotically. It plays a key role in maintaining sodium homeostasis through electrogenic sodium reabsorption in the kidneys. Additionally, ENaC is essential for airway surface liquid homeostasis, which is crucial for proper mucus clearance. In Pan troglodytes (Chimpanzee), this protein is Epithelial sodium channel subunit alpha.